We begin with the raw amino-acid sequence, 403 residues long: Probable tubulin--tyrosine ligase C12B10.04 (403 aa).

The TTL domain occupies 9–386 (KVYVNYRDEY…PFFESSTKRN (378 aa)).

It belongs to the tubulin--tyrosine ligase family. The cofactor is Mg(2+). K(+) is required as a cofactor.

The protein localises to the cytoplasm. The protein resides in the nucleus. The catalysed reaction is C-terminal L-alpha-aminoacyl-L-glutamyl-L-glutamyl-[tubulin] + L-tyrosine + ATP = C-terminal L-alpha-aminoacyl-L-glutamyl-L-glutamyl-L-tyrosyl-[tubulin] + ADP + phosphate + H(+). Probable tubulin--tyrosine ligase. This Schizosaccharomyces pombe (strain 972 / ATCC 24843) (Fission yeast) protein is Probable tubulin--tyrosine ligase C12B10.04.